A 312-amino-acid polypeptide reads, in one-letter code: Transcription initiation factor IIB 1 (312 aa).

Residues 12–43 form a TFIIB-type zinc finger; the sequence is EIERCPECGSTNLIRDYEHGELVCGECGAVIE. Residues cysteine 16, cysteine 19, cysteine 35, and cysteine 38 each coordinate Zn(2+). A run of 2 repeats spans residues 129–212 and 223–304.

It belongs to the TFIIB family.

Stabilizes TBP binding to an archaeal box-A promoter. Also responsible for recruiting RNA polymerase II to the pre-initiation complex (DNA-TBP-TFIIB). The protein is Transcription initiation factor IIB 1 of Thermoplasma volcanium (strain ATCC 51530 / DSM 4299 / JCM 9571 / NBRC 15438 / GSS1).